A 123-amino-acid polypeptide reads, in one-letter code: Large ribosomal subunit protein uL29 (123 aa).

K19 carries the N6-acetyllysine modification. Residue K25 forms a Glycyl lysine isopeptide (Lys-Gly) (interchain with G-Cter in SUMO2) linkage. S29 carries the phosphoserine modification. K43 carries the N6-acetyllysine modification. The interval 95-114 (LNKHEENLKTKKQQRKERLY) is disordered.

It belongs to the universal ribosomal protein uL29 family. As to quaternary structure, component of the large ribosomal subunit.

It localises to the cytoplasm. In terms of biological role, component of the large ribosomal subunit. The ribosome is a large ribonucleoprotein complex responsible for the synthesis of proteins in the cell. The sequence is that of Large ribosomal subunit protein uL29 (RPL35) from Bos taurus (Bovine).